We begin with the raw amino-acid sequence, 758 residues long: 5-methyltetrahydropteroyltriglutamate--homocysteine methyltransferase (758 aa).

5-methyltetrahydropteroyltri-L-glutamate is bound by residues 16–19 (RELK) and lysine 112. L-homocysteine contacts are provided by residues 433–435 (IGS) and glutamate 486. L-methionine-binding positions include 433-435 (IGS) and glutamate 486. 5-methyltetrahydropteroyltri-L-glutamate is bound by residues 517–518 (RC) and tryptophan 563. L-homocysteine is bound at residue aspartate 601. Position 601 (aspartate 601) interacts with L-methionine. A 5-methyltetrahydropteroyltri-L-glutamate-binding site is contributed by glutamate 607. Residues histidine 643, cysteine 645, and glutamate 667 each coordinate Zn(2+). The active-site Proton donor is the histidine 696. Cysteine 728 is a binding site for Zn(2+).

This sequence belongs to the vitamin-B12 independent methionine synthase family. The cofactor is Zn(2+).

The enzyme catalyses 5-methyltetrahydropteroyltri-L-glutamate + L-homocysteine = tetrahydropteroyltri-L-glutamate + L-methionine. Its pathway is amino-acid biosynthesis; L-methionine biosynthesis via de novo pathway; L-methionine from L-homocysteine (MetE route): step 1/1. Its function is as follows. Catalyzes the transfer of a methyl group from 5-methyltetrahydrofolate to homocysteine resulting in methionine formation. The protein is 5-methyltetrahydropteroyltriglutamate--homocysteine methyltransferase of Neisseria gonorrhoeae (strain ATCC 700825 / FA 1090).